Consider the following 303-residue polypeptide: Glutathione transport system permease protein GsiD (303 aa).

Transmembrane regions (helical) follow at residues 37 to 57, 105 to 125, 144 to 164, 165 to 185, 208 to 228, 230 to 250, and 266 to 286; these read QHVALVAGGFVLALILVAIFA, LAAGVFAVFIGAIIGTVLGLL, LFAFPGILLAIAVVAVLGSGI, ANVIVAVAIFSIPAFARLVRG, TILFSHILPGTVSSIVVFFTM, IGTSIISAASLSFLGLGAQPP, and VIAPHVALFPAVAIFLTVLAF. Positions 101–290 constitute an ABC transmembrane type-1 domain; the sequence is AQISLAAGVF…LTVLAFNLLG (190 aa).

This sequence belongs to the binding-protein-dependent transport system permease family. In terms of assembly, the complex is composed of two ATP-binding proteins (GsiA), two transmembrane proteins (GsiC and GsiD) and a solute-binding protein (GsiB).

It is found in the cell inner membrane. Its function is as follows. Part of the ABC transporter complex GsiABCD involved in glutathione import. Probably responsible for the translocation of the substrate across the membrane. This Salmonella paratyphi A (strain ATCC 9150 / SARB42) protein is Glutathione transport system permease protein GsiD.